Consider the following 75-residue polypeptide: Beta-defensin 30 (75 aa).

The signal sequence occupies residues 1–22; the sequence is MGSLQLTLVLFVLLSYVPPVRS. 3 disulfide bridges follow: Cys35-Cys62, Cys42-Cys56, and Cys46-Cys63.

Belongs to the beta-defensin family.

It is found in the secreted. Functionally, has antibacterial activity. The polypeptide is Beta-defensin 30 (Defb30) (Mus musculus (Mouse)).